The following is a 537-amino-acid chain: Tyrosine-protein kinase Yes (537 aa).

Over residues methionine 1–proline 22 the composition is skewed to basic and acidic residues. The tract at residues methionine 1–serine 60 is disordered. Residue glycine 2 is the site of N-myristoyl glycine attachment. A lipid anchor (S-palmitoyl cysteine; in membrane form) is attached at cysteine 3. In terms of domain architecture, SH3 spans glycine 85 to serine 146. The SH2 domain maps to tryptophan 152–cysteine 249. One can recognise a Protein kinase domain in the interval leucine 271–phenylalanine 524. Residues leucine 277–valine 285 and lysine 299 contribute to the ATP site. Catalysis depends on aspartate 390, which acts as the Proton acceptor. Tyrosine 420 carries the phosphotyrosine; by autocatalysis modification. Position 531 is a phosphotyrosine; by CSK (tyrosine 531).

It belongs to the protein kinase superfamily. Tyr protein kinase family. SRC subfamily. In terms of processing, autophosphorylated at Tyr-420 inducing activation. Palmitoylation at Cys-3 promotes membrane localization.

The protein localises to the cell membrane. Its subcellular location is the cytoplasm. It is found in the cytoskeleton. It localises to the microtubule organizing center. The protein resides in the centrosome. The protein localises to the cytosol. Its subcellular location is the cell junction. The catalysed reaction is L-tyrosyl-[protein] + ATP = O-phospho-L-tyrosyl-[protein] + ADP + H(+). Non-receptor protein tyrosine kinase that is involved in the regulation of cell growth and survival, apoptosis, cell-cell adhesion, cytoskeleton remodeling, differentiation, G2/M progression and cytokinesis. The sequence is that of Tyrosine-protein kinase Yes (yes1) from Xenopus laevis (African clawed frog).